Here is a 204-residue protein sequence, read N- to C-terminus: Chaperone protein TorD (204 aa).

This sequence belongs to the TorD/DmsD family. TorD subfamily.

Its subcellular location is the cytoplasm. Involved in the biogenesis of TorA. Acts on TorA before the insertion of the molybdenum cofactor and, as a result, probably favors a conformation of the apoenzyme that is competent for acquiring the cofactor. In Shewanella baltica (strain OS223), this protein is Chaperone protein TorD.